Consider the following 391-residue polypeptide: Thyroid hormone receptor alpha-B (391 aa).

Residues 1–32 (MAQWPEKEEEEQPMFGEEYTGYIPSYLEKDEP) are modulating. NR C4-type zinc fingers lie at residues 33-53 (CVVCGDKATGYHYRCITCEGC) and 71-95 (CKYDCCCIIDKITRNQCQLCRFKKC). Positions 33 to 100 (CVVCGDKATG…RFKKCIAVGM (68 aa)) form a DNA-binding region, nuclear receptor. The NR LBD domain occupies 143–388 (AEWELIRMVT…PPLFLEVFED (246 aa)).

It belongs to the nuclear hormone receptor family. NR1 subfamily.

The protein localises to the nucleus. In terms of biological role, high affinity receptor for triiodothyronine. The polypeptide is Thyroid hormone receptor alpha-B (thra2) (Paralichthys olivaceus (Bastard halibut)).